A 172-amino-acid chain; its full sequence is Ribosome maturation factor RimM (172 aa).

One can recognise a PRC barrel domain in the interval 96 to 170 (EENEFYFHEI…KITIEVMEGL (75 aa)).

Belongs to the RimM family. Binds ribosomal protein uS19.

The protein localises to the cytoplasm. In terms of biological role, an accessory protein needed during the final step in the assembly of 30S ribosomal subunit, possibly for assembly of the head region. Essential for efficient processing of 16S rRNA. May be needed both before and after RbfA during the maturation of 16S rRNA. It has affinity for free ribosomal 30S subunits but not for 70S ribosomes. The chain is Ribosome maturation factor RimM from Listeria monocytogenes serotype 4b (strain CLIP80459).